Here is a 357-residue protein sequence, read N- to C-terminus: cAMP-responsive element modulator (357 aa).

The KID domain occupies 101–160 (TVQVATIAETDDSADSEVIDSHKRREILSRRPSYRKILNELSSDVPGIPKIEEEKSEEEG). Phosphoserine is present on residues Ser-116, Ser-142, Ser-284, Ser-287, and Ser-290. In terms of domain architecture, bZIP spans 299 to 357 (TRKRELRLMKNREAAKECRRRKKEYVKCLESRVAVLEVQNKKLIEELETLKDICSPKTD). The interval 300 to 325 (RKRELRLMKNREAAKECRRRKKEYVK) is basic motif. A leucine-zipper region spans residues 327–348 (LESRVAVLEVQNKKLIEELETL).

The protein belongs to the bZIP family. Binds DNA as a dimer. Interacts with CDC34. Interacts with FHL5. Isoform delta forms a heterodimer with CREB3L4. May interact with TSSK4. Post-translationally, stimulated by phosphorylation. Phosphorylated on Ser-116 by TSSK4 in vitro. Ubiquitinated by CDC34 and RAD6B in order to be degraded by the proteasome. Isoform Tau is expressed in testis germ cells. CREM-theta1- and CREM-theta2-containing isoforms are expressed in testis.

It localises to the nucleus. Its function is as follows. Transcriptional regulator that binds the cAMP response element (CRE), a sequence present in many viral and cellular promoters. Isoforms are either transcriptional activators or repressors. Isoform Delta is an activator. Plays a role in spermatogenesis and is involved in spermatid maturation. Binding of isoform Tau (activator) to CRE is increased by CREB3L4. The CREM isoform Tau-CREB3L4 heterodimer functions through CRE and may recruit HIRA to CRE to regulate histone exchange. This is cAMP-responsive element modulator (Crem) from Rattus norvegicus (Rat).